A 775-amino-acid chain; its full sequence is MINIIIKANMKKIILQGYDVGDFSNQQSIVPIYKGNNIEAYLAQKAPEAREIFIYAHGSQYFSHEHSLPQLSLTLQSSNNELVPSILSKITENTEENKPNIVHILSCHASTAHYNMQNINGNIVLCTYAPANYVSNGYVAELLFNTKNNFDNLNDFIVKKLPLLTAISFGISYKLDENVYPLIFDNSSIKGMDINSFSEFLQKQYIKVQKFYTNLQEKYVDKYPELFPEYNFPEKISYSTEELKQAFNVLLNLDSEKLSIEEIQHLLAIDNSHVGNILADAIKCNRTDAIEVVINTMKEATTVDLHSAVKFNNLAVLNRLLDKTEKVENCILQEAIQEHKIEIAEMLINSNKIKSFTNDYLLVAINANNLPILKILLNKEENIVGYLLYRAAELENINTAETVELLFDKTKETDYFINTRVLLRAVKENCLSLINKVIGRMNEFDDIPDVIFDSVIERGNTQIIKILLEKIASFDFLIKAINSNNLPAVEDILKTIKVENKDIAAIIMSGNTDMFKILANKIGDDKILDIAIKLGDSSVVNNILDEKEKQGILDSNKLDEIFETAVKNSNGNVIEDIMNRMPEVTGKHLTIAMQYYAPERAFIFDKVYNSIKQIEYNLILTAIDSGIPDVIQKLVSKLGDEKKASILYDILRSSDIVKNMVVSNILLNNIAKIPDNYKYALLDLTSKGNSYGIKNFFIFNRLLEKSGPIDEEHLNTYLGLLDPSDMFSIMCMGSLYNMKHLASNHNNITTVEDTIVDNLTVTGEINITPSDVNLL.

ANK repeat units lie at residues 66–95 (HSLP…ENTE), 300–329 (ATTV…KVEN), 331–356 (ILQE…IKSF), 357–385 (TNDY…NIVG), 447–476 (IPDV…SFDF), and 523–552 (GDDK…KQGI).

The sequence is that of Putative ankyrin repeat protein RBE_0801 from Rickettsia bellii (strain RML369-C).